The following is a 193-amino-acid chain: NAD(P)H-quinone oxidoreductase subunit I (193 aa).

4Fe-4S ferredoxin-type domains are found at residues 55-84 (GRIH…VDWE) and 95-124 (KHYS…VTEE). C64, C67, C70, C74, C104, C107, C110, and C114 together coordinate [4Fe-4S] cluster.

Belongs to the complex I 23 kDa subunit family. As to quaternary structure, NDH-1 is composed of at least 11 different subunits. The cofactor is [4Fe-4S] cluster.

Its subcellular location is the cellular thylakoid membrane. It catalyses the reaction a plastoquinone + NADH + (n+1) H(+)(in) = a plastoquinol + NAD(+) + n H(+)(out). It carries out the reaction a plastoquinone + NADPH + (n+1) H(+)(in) = a plastoquinol + NADP(+) + n H(+)(out). NDH-1 shuttles electrons from an unknown electron donor, via FMN and iron-sulfur (Fe-S) centers, to quinones in the respiratory and/or the photosynthetic chain. The immediate electron acceptor for the enzyme in this species is believed to be plastoquinone. Couples the redox reaction to proton translocation, and thus conserves the redox energy in a proton gradient. This Cyanothece sp. (strain PCC 7425 / ATCC 29141) protein is NAD(P)H-quinone oxidoreductase subunit I.